The following is a 321-amino-acid chain: Phosphate acyltransferase (321 aa).

The protein belongs to the PlsX family. As to quaternary structure, homodimer. Probably interacts with PlsY.

The protein resides in the cytoplasm. It carries out the reaction a fatty acyl-[ACP] + phosphate = an acyl phosphate + holo-[ACP]. The protein operates within lipid metabolism; phospholipid metabolism. In terms of biological role, catalyzes the reversible formation of acyl-phosphate (acyl-PO(4)) from acyl-[acyl-carrier-protein] (acyl-ACP). This enzyme utilizes acyl-ACP as fatty acyl donor, but not acyl-CoA. In Chlamydia trachomatis serovar A (strain ATCC VR-571B / DSM 19440 / HAR-13), this protein is Phosphate acyltransferase.